Consider the following 545-residue polypeptide: Probable bifunctional tRNA threonylcarbamoyladenosine biosynthesis protein (545 aa).

The interval 1 to 329 is kae1; that stretch reads MKNTFILGIE…YRTDDVKVTW (329 aa). Fe cation-binding residues include H113, H117, and Y134. Residues 134–138, D166, G179, E183, and N262 each bind L-threonylcarbamoyladenylate; that span reads YVSGA. Residue D290 participates in Fe cation binding. Positions 340 to 545 constitute a Protein kinase domain; sequence EISPGTSLKL…EEIKKRARYA (206 aa). ATP is bound by residues 353-361 and K375; that span reads LDNGAEAIV. The Proton acceptor; for kinase activity role is filled by D462.

The protein in the N-terminal section; belongs to the KAE1 / TsaD family. It in the C-terminal section; belongs to the protein kinase superfamily. Tyr protein kinase family. BUD32 subfamily. As to quaternary structure, component of the KEOPS complex that consists of Kae1, Bud32, Cgi121 and Pcc1; the whole complex dimerizes. Fe(2+) is required as a cofactor.

The protein resides in the cytoplasm. It carries out the reaction L-seryl-[protein] + ATP = O-phospho-L-seryl-[protein] + ADP + H(+). The enzyme catalyses L-threonyl-[protein] + ATP = O-phospho-L-threonyl-[protein] + ADP + H(+). It catalyses the reaction L-threonylcarbamoyladenylate + adenosine(37) in tRNA = N(6)-L-threonylcarbamoyladenosine(37) in tRNA + AMP + H(+). In terms of biological role, required for the formation of a threonylcarbamoyl group on adenosine at position 37 (t(6)A37) in tRNAs that read codons beginning with adenine. Is a component of the KEOPS complex that is probably involved in the transfer of the threonylcarbamoyl moiety of threonylcarbamoyl-AMP (TC-AMP) to the N6 group of A37. The Kae1 domain likely plays a direct catalytic role in this reaction. The Bud32 domain probably displays kinase activity that regulates Kae1 function. In Methanosarcina barkeri (strain Fusaro / DSM 804), this protein is Probable bifunctional tRNA threonylcarbamoyladenosine biosynthesis protein.